The chain runs to 281 residues: Probable endonuclease 4 (281 aa).

Zn(2+)-binding residues include His69, His109, Glu145, Asp179, His182, His216, Asp229, His231, and Glu261.

Belongs to the AP endonuclease 2 family. It depends on Zn(2+) as a cofactor.

The enzyme catalyses Endonucleolytic cleavage to 5'-phosphooligonucleotide end-products.. Endonuclease IV plays a role in DNA repair. It cleaves phosphodiester bonds at apurinic or apyrimidinic (AP) sites, generating a 3'-hydroxyl group and a 5'-terminal sugar phosphate. The polypeptide is Probable endonuclease 4 (Pectobacterium atrosepticum (strain SCRI 1043 / ATCC BAA-672) (Erwinia carotovora subsp. atroseptica)).